Reading from the N-terminus, the 1416-residue chain is DNA-directed RNA polymerase subunit beta (1416 aa).

The protein belongs to the RNA polymerase beta chain family. In terms of assembly, in plastids the minimal PEP RNA polymerase catalytic core is composed of four subunits: alpha, beta, beta', and beta''. When a (nuclear-encoded) sigma factor is associated with the core the holoenzyme is formed, which can initiate transcription.

The protein localises to the plastid. It is found in the chloroplast. The catalysed reaction is RNA(n) + a ribonucleoside 5'-triphosphate = RNA(n+1) + diphosphate. In terms of biological role, DNA-dependent RNA polymerase catalyzes the transcription of DNA into RNA using the four ribonucleoside triphosphates as substrates. This is DNA-directed RNA polymerase subunit beta from Oltmannsiellopsis viridis (Marine flagellate).